Consider the following 278-residue polypeptide: BPI fold-containing family A member 1 (278 aa).

An N-terminal signal peptide occupies residues 1–19 (MFLVGSLVVLCGLLAHSTA). Repeat repeat units follow at residues 23 to 28 (GLPLPL), 30 to 36 (QGPPLPL), 39 to 44 (GPPLPL), and 47 to 52 (GQLLPL). The interval 23 to 52 (GLPLPLGQGPPLPLNQGPPLPLNQGQLLPL) is 4 X 6 AA repeats of G-[LPQ]-[PL]-L-P-L. The tract at residues 112 to 117 (LVGGLL) is important for surfactant activity and antibacterial properties. 2 N-linked (GlcNAc...) asparagine glycosylation sites follow: N182 and N228. The cysteines at positions 204 and 246 are disulfide-linked.

The protein belongs to the BPI/LBP/Plunc superfamily. Plunc family. In terms of assembly, monomer. Interacts (via N-terminus) with SCNN1B, a subunit of the heterotrimeric epithelial sodium channel (ENaC); this inhibits proteolytic activation of ENaC. In terms of tissue distribution, detected in airway epithelia (trachea and lung) and in bronchoalveolar fluid (at protein level). Upper airways, nasopharyngeal epithelium and thymus. Highest expression in the trachea and progressive decrease from proximal (bronchial) to distal (bronchiolar) airways. No expression is detected in the terminal bronchioles, respiratory bronchioles or lung alveoli.

The protein resides in the secreted. Functionally, lipid-binding protein which shows high specificity for the surfactant phospholipid dipalmitoylphosphatidylcholine (DPPC). Plays a role in the innate immune responses of the upper airways. Reduces the surface tension in secretions from airway epithelia and inhibits the formation of biofilm by pathogenic Gram-negative bacteria, such as P.aeruginosa and K.pneumoniae. Negatively regulates proteolytic cleavage of SCNN1G, an event that is required for activation of the epithelial sodium channel (ENaC), and thereby contributes to airway surface liquid homeostasis and proper clearance of mucus. Plays a role in the airway inflammatory response after exposure to irritants. May attract macrophages and neutrophils. The polypeptide is BPI fold-containing family A member 1 (Bpifa1) (Mus musculus (Mouse)).